The chain runs to 303 residues: Serine/threonine-protein phosphatase PP-X homolog 2 (303 aa).

Positions 51, 53, 79, and 111 each coordinate Mn(2+). H112 functions as the Proton donor in the catalytic mechanism. The Mn(2+) site is built by H161 and H235.

It belongs to the PPP phosphatase family. PP-4 (PP-X) subfamily. It depends on Mn(2+) as a cofactor.

The enzyme catalyses O-phospho-L-seryl-[protein] + H2O = L-seryl-[protein] + phosphate. It carries out the reaction O-phospho-L-threonyl-[protein] + H2O = L-threonyl-[protein] + phosphate. This Paramecium tetraurelia protein is Serine/threonine-protein phosphatase PP-X homolog 2 (Ppx2).